The chain runs to 121 residues: Peptidyl-tRNA hydrolase (121 aa).

This sequence belongs to the PTH2 family.

It is found in the cytoplasm. The enzyme catalyses an N-acyl-L-alpha-aminoacyl-tRNA + H2O = an N-acyl-L-amino acid + a tRNA + H(+). Functionally, the natural substrate for this enzyme may be peptidyl-tRNAs which drop off the ribosome during protein synthesis. The sequence is that of Peptidyl-tRNA hydrolase from Sulfurisphaera tokodaii (strain DSM 16993 / JCM 10545 / NBRC 100140 / 7) (Sulfolobus tokodaii).